Reading from the N-terminus, the 906-residue chain is Protein translocase subunit SecA (906 aa).

Residues Gln-87, 105–109 (GEGKT), and Asp-512 each bind ATP. The tract at residues 875-897 (VTFVRDEQKVGRNDPCPCGSGKK) is disordered. Zn(2+) is bound by residues Cys-890, Cys-892, Cys-901, and His-902.

Belongs to the SecA family. In terms of assembly, monomer and homodimer. Part of the essential Sec protein translocation apparatus which comprises SecA, SecYEG and auxiliary proteins SecDF-YajC and YidC. Zn(2+) is required as a cofactor.

The protein resides in the cell inner membrane. Its subcellular location is the cytoplasm. The catalysed reaction is ATP + H2O + cellular proteinSide 1 = ADP + phosphate + cellular proteinSide 2.. Functionally, part of the Sec protein translocase complex. Interacts with the SecYEG preprotein conducting channel. Has a central role in coupling the hydrolysis of ATP to the transfer of proteins into and across the cell membrane, serving both as a receptor for the preprotein-SecB complex and as an ATP-driven molecular motor driving the stepwise translocation of polypeptide chains across the membrane. In Aeromonas hydrophila subsp. hydrophila (strain ATCC 7966 / DSM 30187 / BCRC 13018 / CCUG 14551 / JCM 1027 / KCTC 2358 / NCIMB 9240 / NCTC 8049), this protein is Protein translocase subunit SecA.